A 279-amino-acid polypeptide reads, in one-letter code: Replication protein A 32 kDa subunit A (279 aa).

A disordered region spans residues Met-1–Thr-33. Positions Met-19–Ser-32 are enriched in low complexity. The segment at residues Val-73–Ile-148 is a DNA-binding region (OB).

Belongs to the replication factor A protein 2 family. In terms of assembly, heterotrimer of RPA1, RPA2 and RPA3 (canonical replication protein A complex). Interacts with ROS1. Binds to ASE1/At3g02920, PDX2, At5g62350, RPA1A/At2g06510, ARF1/At1g10630, At4g18590 and At3g52630. In terms of processing, phosphorylated in a cell-cycle-dependent manner (from the S phase until mitosis). In response to DNA damage, recruited to DNA-repair nuclear foci, as a hypophosphorylated form. Strongly expressed in shoot and root meristems. Present in seedlings, roots, leaves, siliques and flowers.

It localises to the nucleus. Functionally, component of the replication protein A complex (RPA) required for DNA recombination, repair and replication. The activity of RPA is mediated by single-stranded DNA binding and protein interactions. Required fo cell division in meristems. Involved in the maintenance of transcriptional epigenetic gene silencing (TGS) at specific loci (including some transposons) by regulating histone H3 acetylation, 'Lys-4' and 'Lys-9' methylation. The chain is Replication protein A 32 kDa subunit A (RPA2A) from Arabidopsis thaliana (Mouse-ear cress).